The primary structure comprises 326 residues: Phosphate acyltransferase (326 aa).

Belongs to the PlsX family. Homodimer. Probably interacts with PlsY.

The protein localises to the cytoplasm. It carries out the reaction a fatty acyl-[ACP] + phosphate = an acyl phosphate + holo-[ACP]. Its pathway is lipid metabolism; phospholipid metabolism. In terms of biological role, catalyzes the reversible formation of acyl-phosphate (acyl-PO(4)) from acyl-[acyl-carrier-protein] (acyl-ACP). This enzyme utilizes acyl-ACP as fatty acyl donor, but not acyl-CoA. In Thermus thermophilus (strain ATCC BAA-163 / DSM 7039 / HB27), this protein is Phosphate acyltransferase.